The sequence spans 563 residues: MRLRTAIATLCLTAFTSATSNNSYIATDQTQNAFNDTHFCKVDRNDHVSPSCNVTFNELNAINENIRDDLSALLKSDFFKYFRLDLYKQCSFWDANDGLCLNRACSVDVVEDWDTLPEYWQPEILGSFNNDTMKEADDSDDECKFLDQLCQTSKKPVDIEDTINYCDVNDFNGKNAVLIDLTANPERFTGYGGKQAGQIWSTIYQDNCFTIGETGESLAKDAFYRLVSGFHASIGTHLSKEYLNTKTGKWEPNLDLFMARIGNFPDRVTNMYFNYAVVAKALWKIQPYLPEFSFCDLVNKEIKNKMDNVISQLDTKIFNEDLVFANDLSLTLKDEFRSRFKNVTKIMDCVQCDRCRLWGKIQTTGYATALKILFEINDADEFTKQHIVGKLTKYELIALLQTFGRLSESIESVNMFEKMYGKRLNGSENRLSSFFQNNFFNILKEAGKSIRYTIENINSTKEGKKKTNNSQSHVFDDLKMPKAEIVPRPSNGTVNKWKKAWNTEVNNVLEAFRFIYRSYLDLPRNIWELSLMKVYKFWNKFIGVADYVSEETREPISYKLDIQ.

Residues methionine 1–alanine 18 form the signal peptide. N-linked (GlcNAc...) asparagine glycosylation is found at asparagine 21, asparagine 35, and asparagine 53. Intrachain disulfides connect cysteine 90-cysteine 349, cysteine 100-cysteine 105, cysteine 143-cysteine 166, cysteine 150-cysteine 295, and cysteine 352-cysteine 355. N-linked (GlcNAc...) asparagine glycosylation occurs at asparagine 130. 6 residues coordinate FAD: arginine 187, threonine 189, tryptophan 200, serine 228, histidine 231, and arginine 260. N-linked (GlcNAc...) asparagine glycosylation occurs at asparagine 342. Cysteine 352 (nucleophile) is an active-site residue. The active site involves cysteine 355. Residues asparagine 425, asparagine 458, asparagine 468, and asparagine 491 are each glycosylated (N-linked (GlcNAc...) asparagine).

This sequence belongs to the EROs family. As to quaternary structure, may function both as a monomer and a homodimer. Requires FAD as cofactor. In terms of processing, the Cys-100/Cys-105 and Cys-352/Cys-355 disulfide bonds constitute the redox-active center. The Cys-100/Cys-105 disulfide bond may accept electron from PDI1 and funnel them to the active site disulfide Cys-352/Cys-355. Post-translationally, N-glycosylated.

It localises to the endoplasmic reticulum membrane. Enzyme activity is tightly regulated to prevent the accumulation of reactive oxygen species in the endoplasmic reticulum. Reversibly down-regulated by the formation of disulfide bonds between Cys-150 and Cys-295. In terms of biological role, essential oxidoreductase that oxidizes proteins in the endoplasmic reticulum to produce disulfide bonds. Acts by oxidizing directly PDI1 isomerase through a direct disulfide exchange. Does not act as a direct oxidant of folding substrate, but relies on PDI1 to transfer oxidizing equivalent. Also able to oxidize directly the PDI related protein MPD2. Does not oxidize all PDI related proteins, suggesting that it can discriminate between PDI1 and related proteins. Reoxidation of ERO1 probably involves electron transfer to molecular oxygen via FAD. Acts independently of glutathione. May be responsible for a significant proportion of reactive oxygen species (ROS) in the cell, thereby being a source of oxidative stress. The polypeptide is Endoplasmic oxidoreductin-1 (ERO1) (Saccharomyces cerevisiae (strain ATCC 204508 / S288c) (Baker's yeast)).